The following is a 274-amino-acid chain: Large ribosomal subunit protein uL2cz/uL2cy (274 aa).

Disordered stretches follow at residues 1-24 and 223-274; these read MAIHLYKTSTPSTRNGTVDSQVKS and MNPV…RRSK. Residues 7-24 are compositionally biased toward polar residues; sequence KTSTPSTRNGTVDSQVKS.

It belongs to the universal ribosomal protein uL2 family. In terms of assembly, part of the 50S ribosomal subunit.

It localises to the plastid. The protein resides in the chloroplast. This Nicotiana sylvestris (Wood tobacco) protein is Large ribosomal subunit protein uL2cz/uL2cy (rpl2-A).